Consider the following 423-residue polypeptide: T-box protein 2 (423 aa).

Positions 70–243 form a DNA-binding region, T-box; sequence LWQQFSQCGT…NNPFAKGFRD (174 aa). Disordered stretches follow at residues 238-324 and 384-423; these read AKGF…PLRS and VEAT…LSKP. Residues 261 to 283 show a composition bias toward polar residues; the sequence is DATQSPPGKTASLPTHSPHPSES. A compositionally biased stretch (low complexity) spans 302-317; the sequence is TPTTSSLSTSTTPTLS. Positions 394–404 are enriched in basic and acidic residues; it reads AEKPEVKKEQK.

Post-translationally, sumoylated. As to expression, expressed in body wall muscles and a subset of pharyngeal neurons. Expressed in head neurons and occassionally tail neurons. Not expressed in the pharynx.

It localises to the nucleus. Involved in the transcriptional regulation of genes required for the development of pharyngeal muscles derived from the ABa lineage. Acts as a transcriptional repressor and binds to T-box binding sites in its own promoter to negatively autoregulate its own expression in neurons, seam cells and the gut in order to restrict its expression to certain tissues. May function together with the nfya-1-NF-Y complex to repress its own expression. Plays a role in neural fate specification in the hermaphrodite-specific neuron (HSN)/PHB neuron lineage, acting in concert with homeobox protein egl-5 and the asymmetric cell division protein ham-1. This Caenorhabditis elegans protein is T-box protein 2.